Consider the following 298-residue polypeptide: Junctional adhesion molecule B (298 aa).

A signal peptide spans 1–28 (MARRSRHRLLLLLLRYLVVALGYHKAYG). Over 29-238 (FSAPKDQQVV…RMQVDDLNIS (210 aa)) the chain is Extracellular. The Ig-like V-type domain maps to 32–127 (PKDQQVVTAV…GQNLEEDTVT (96 aa)). 2 disulfides stabilise this stretch: cysteine 50–cysteine 109 and cysteine 155–cysteine 214. Residues asparagine 98, asparagine 187, and asparagine 236 are each glycosylated (N-linked (GlcNAc...) asparagine). One can recognise an Ig-like C2-type domain in the interval 134–238 (PAVPSCEVPS…RMQVDDLNIS (105 aa)). The chain crosses the membrane as a helical span at residues 239–259 (GIIAAVVVVALVISVCGLGVC). The Cytoplasmic segment spans residues 260 to 298 (YAQRKGYFSKETSFQKSNSSSKATTMSENDFKHTKSFII).

This sequence belongs to the immunoglobulin superfamily. Highly expressed in heart, placenta, lung, foreskin and lymph node. Prominently expressed on high endothelial venules and also present on the endothelia of other vessels (at protein level). Also expressed in the brain in the caudate nuclei.

The protein resides in the cell membrane. Its subcellular location is the cell junction. It is found in the tight junction. Junctional adhesion protein that mediates heterotypic cell-cell interactions with its cognate receptor JAM3 to regulate different cellular processes. Plays a role in homing and mobilization of hematopoietic stem and progenitor cells within the bone marrow. At the surface of bone marrow stromal cells, it contributes to the retention of the hematopoietic stem and progenitor cells expressing JAM3. Plays a central role in leukocytes extravasation by facilitating not only transmigration but also tethering and rolling of leukocytes along the endothelium. Tethering and rolling of leukocytes are dependent on the binding by JAM2 of the integrin alpha-4/beta-1. Plays a role in spermatogenesis where JAM2 and JAM3, which are respectively expressed by Sertoli and germ cells, mediate an interaction between both cell types and play an essential role in the anchorage of germ cells onto Sertoli cells and the assembly of cell polarity complexes during spermatid differentiation. Also functions as an inhibitory somatodendritic cue that prevents the myelination of non-axonal parts of neurons. During myogenesis, it is involved in myocyte fusion. May also play a role in angiogenesis. This chain is Junctional adhesion molecule B, found in Homo sapiens (Human).